The sequence spans 224 residues: MQVLLVEDDQTLFQELKKELEHWDFFVTGIDDFSAVMDIYEETNPEIVIMDVQLPKYDGFYWCRKIRQVSNVPILFLSSRDNPMDQVMSMELGADDYMQKPFHTNVLIAKLQAIYRRVYEFGAEEKRTLNWQDALVDLSKDSIQKGDSVIYLSKTEMIILEMLIQKQNQIVTRDTLITALWDDEAFVSDNTLTVNVNRLRKKLSDIGMDTQIETKVGKGYMAHE.

The Response regulatory domain occupies 2-115; the sequence is QVLLVEDDQT…VLIAKLQAIY (114 aa). D51 carries the 4-aspartylphosphate modification. The segment at residues 126–224 is a DNA-binding region (ompR/PhoB-type); it reads KRTLNWQDAL…KVGKGYMAHE (99 aa).

Phosphorylated by GraS.

It localises to the cytoplasm. Member of the two-component regulatory system GraR/GraS involved in resistance against cationic antimicrobial peptides (CAMPs). The polypeptide is Response regulator protein GraR (graR) (Staphylococcus haemolyticus (strain JCSC1435)).